Reading from the N-terminus, the 626-residue chain is Phosphomethylpyrimidine synthase (626 aa).

The segment at 1–22 (MTKQEKAINLSESAQVDQQSVQ) is disordered. Residues 10–22 (LSESAQVDQQSVQ) show a composition bias toward polar residues. Residues asparagine 232, methionine 261, tyrosine 290, histidine 326, 346 to 348 (SRG), 387 to 390 (DGLR), and glutamate 426 contribute to the substrate site. Histidine 430 contributes to the Zn(2+) binding site. Position 453 (tyrosine 453) interacts with substrate. Residue histidine 494 participates in Zn(2+) binding. 3 residues coordinate [4Fe-4S] cluster: cysteine 574, cysteine 577, and cysteine 582.

The protein belongs to the ThiC family. As to quaternary structure, homodimer. It depends on [4Fe-4S] cluster as a cofactor.

The enzyme catalyses 5-amino-1-(5-phospho-beta-D-ribosyl)imidazole + S-adenosyl-L-methionine = 4-amino-2-methyl-5-(phosphooxymethyl)pyrimidine + CO + 5'-deoxyadenosine + formate + L-methionine + 3 H(+). It participates in cofactor biosynthesis; thiamine diphosphate biosynthesis. In terms of biological role, catalyzes the synthesis of the hydroxymethylpyrimidine phosphate (HMP-P) moiety of thiamine from aminoimidazole ribotide (AIR) in a radical S-adenosyl-L-methionine (SAM)-dependent reaction. In Pseudomonas putida (strain ATCC 700007 / DSM 6899 / JCM 31910 / BCRC 17059 / LMG 24140 / F1), this protein is Phosphomethylpyrimidine synthase.